A 409-amino-acid polypeptide reads, in one-letter code: MKAEILCVGTELLLGDIVNTNAQYISKELANIGIEVYHHSVIGDNENRLLKELERAFNYCDLVITTGGLGPTKDDLTKESVAKFFQEDLVLHEKSLKQIEKRLLCFNKSMTESNKKQAYFPKNCEILENPNGTAPGFIIEKDNKIAIILPGPPYEMQPMFEKKVMPYLEKLTNCTIKSKVLRITGIGESDVADLISDILESQTNPTVAPYAKQGETTLRITAKANSEEKALNLIVPIEKKIRQILEDNIYGSGETSLEEVIANILVKRNLTIATAESCTGGLLAGKLINFPGISSVFLEGAITYSNESKINRLNVKKETLEKYTAVSKEVALEMAEGIAKSSGTNIGISTTGVAGPGGGTYDKPIGLVYIGLYINGKTFVKELNYSGNRQFIRNITVTRALDFLRRNLK.

This sequence belongs to the CinA family.

The chain is Putative competence-damage inducible protein from Clostridium botulinum (strain Langeland / NCTC 10281 / Type F).